Here is a 469-residue protein sequence, read N- to C-terminus: 24-hydroxycholesterol 7-alpha-hydroxylase (469 aa).

The N-terminal stretch at 1–23 (MELISPTVIIILGCLALFLLLQR) is a signal peptide. The next 3 membrane-spanning stretches (helical) occupy residues 267-287 (GLLL…WTLA), 352-372 (VEIL…PFWL), and 412-432 (FQCP…ILIL). C414 contacts heme.

It belongs to the cytochrome P450 family. Heme serves as cofactor. As to expression, liver specific.

It localises to the endoplasmic reticulum membrane. It is found in the microsome membrane. It catalyses the reaction (24S)-hydroxycholesterol + reduced [NADPH--hemoprotein reductase] + O2 = (24S)-7alpha-dihydroxycholesterol + oxidized [NADPH--hemoprotein reductase] + H2O + H(+). It participates in steroid metabolism; cholesterol degradation. It functions in the pathway lipid metabolism; bile acid biosynthesis. In terms of biological role, a cytochrome P450 monooxygenase involved in neural cholesterol clearance through bile acid synthesis. Catalyzes 7-alpha hydroxylation of (24S)-hydroxycholesterol, a neural oxysterol that is metabolized to bile acids in the liver. Mechanistically, uses molecular oxygen inserting one oxygen atom into a substrate, and reducing the second into a water molecule, with two electrons provided by NADPH via cytochrome P450 reductase (CPR; NADPH-ferrihemoprotein reductase). The protein is 24-hydroxycholesterol 7-alpha-hydroxylase of Homo sapiens (Human).